Consider the following 370-residue polypeptide: MVLFFSTRFLFFSIFFPCLISITLYQLDSFEPASLPADSLITSPTSIPPLLNDRFLTGAEFIGVGLLNNPEDIAYHKDSNLIYTGCVDGWVKRVSVHDSANDSIVEDWVNTGGRPLGIAFGLHGEVIVADANKGLLSISDGGKKTELLTDEADGVRFKLTDAVTVADNGVLYFTDASSKYDFYQFIFDFLEGKPHGRVMSFDPTTRATRVLLKDLYFANGISMSPDQTHFVFCETIMRRCSKYYISEERVEVFIQGLPGYPDNIRYDGDGHYWIALISEVTTSWKLSMKYLFLRKLIYMAAKYGVELLSIKNAAVLQVDLDGNPIAMYHDHPFSHITSGVKIGNHLYFGSLLHSYITRLDLLKYPAQKKL.

An N-terminal signal peptide occupies residues 1 to 21 (MVLFFSTRFLFFSIFFPCLIS). A glycan (N-linked (GlcNAc...) asparagine) is linked at Asn101. Phosphotyrosine is present on Tyr303.

This sequence belongs to the strictosidine synthase family.

It is found in the vacuole. This Arabidopsis thaliana (Mouse-ear cress) protein is Protein STRICTOSIDINE SYNTHASE-LIKE 4.